Consider the following 319-residue polypeptide: Lipoyl synthase (319 aa).

Positions 1–29 are disordered; that stretch reads MVVVVDTVSDKPIRPRHPEKAARPDALSP. The segment covering 8–29 has biased composition (basic and acidic residues); sequence VSDKPIRPRHPEKAARPDALSP. Positions 61, 66, 72, 87, 91, 94, and 300 each coordinate [4Fe-4S] cluster. A Radical SAM core domain is found at 73–289; the sequence is WDRKHATFMI…ESLAYAKGFL (217 aa).

This sequence belongs to the radical SAM superfamily. Lipoyl synthase family. Requires [4Fe-4S] cluster as cofactor.

It localises to the cytoplasm. The enzyme catalyses [[Fe-S] cluster scaffold protein carrying a second [4Fe-4S](2+) cluster] + N(6)-octanoyl-L-lysyl-[protein] + 2 oxidized [2Fe-2S]-[ferredoxin] + 2 S-adenosyl-L-methionine + 4 H(+) = [[Fe-S] cluster scaffold protein] + N(6)-[(R)-dihydrolipoyl]-L-lysyl-[protein] + 4 Fe(3+) + 2 hydrogen sulfide + 2 5'-deoxyadenosine + 2 L-methionine + 2 reduced [2Fe-2S]-[ferredoxin]. It functions in the pathway protein modification; protein lipoylation via endogenous pathway; protein N(6)-(lipoyl)lysine from octanoyl-[acyl-carrier-protein]: step 2/2. Its function is as follows. Catalyzes the radical-mediated insertion of two sulfur atoms into the C-6 and C-8 positions of the octanoyl moiety bound to the lipoyl domains of lipoate-dependent enzymes, thereby converting the octanoylated domains into lipoylated derivatives. The sequence is that of Lipoyl synthase from Rhodopseudomonas palustris (strain BisA53).